A 99-amino-acid polypeptide reads, in one-letter code: Class II hydrophobin 2 (99 aa).

An N-terminal signal peptide occupies residues 1-15 (MKFFVVAALFAGALA). Intrachain disulfides connect Cys30/Cys79 and Cys40/Cys70.

It belongs to the cerato-ulmin hydrophobin family. As to quaternary structure, homotetramer. Further self-assembles to form highly ordered films at water-air interfaces through intermolecular interactions.

It localises to the secreted. Its subcellular location is the cell wall. Aerial growth, conidiation, and dispersal of filamentous fungi in the environment rely upon a capability of their secreting small amphipathic proteins called hydrophobins (HPBs) with low sequence identity. Class I can self-assemble into an outermost layer of rodlet bundles on aerial cell surfaces, conferring cellular hydrophobicity that supports fungal growth, development and dispersal; whereas Class II form highly ordered films at water-air interfaces through intermolecular interactions but contribute nothing to the rodlet structure. HYD2 is a class II hydrophobin that contributes to the fruiting body development. The chain is Class II hydrophobin 2 from Cordyceps militaris (Caterpillar fungus).